A 473-amino-acid polypeptide reads, in one-letter code: Response regulator protein FleR (473 aa).

One can recognise a Response regulatory domain in the interval 4–118 (KVLLVEDDRA…ALLDLVARHA (115 aa)). Asp53 carries the post-translational modification 4-aspartylphosphate. A Sigma-54 factor interaction domain is found at 130–359 (PVALEPASRQ…LDNAIQRALI (230 aa)). Residues 158 to 165 (GESGTGKE) and 221 to 230 (ADGGTILLDE) each bind ATP.

Functionally, member of the two-component regulatory system FleS/FleR that regulates the expression of multiple genes involved in flagellar synthesis, adhesion, swarming, motility and antibiotic resistance. May function as a transcriptional activator by direct binding to a cis-acting sequence upstream of the target genes. In Pseudomonas aeruginosa (strain ATCC 15692 / DSM 22644 / CIP 104116 / JCM 14847 / LMG 12228 / 1C / PRS 101 / PAO1), this protein is Response regulator protein FleR.